A 452-amino-acid chain; its full sequence is PHO85 cyclin CLG1 (452 aa).

It belongs to the cyclin family. PCL1,2 subfamily. In terms of assembly, forms a cyclin-CDK complex with PHO85.

In terms of biological role, cyclin partner of the cyclin-dependent kinase (CDK) PHO85. Has a role in cell integrity and polarized cell growth together with the other PCL1/PCL2 cyclin family members. This is PHO85 cyclin CLG1 (CLG1) from Saccharomyces cerevisiae (strain ATCC 204508 / S288c) (Baker's yeast).